The chain runs to 194 residues: uncharacterized protein (194 aa).

Disordered regions lie at residues 1 to 21 (MPKGRRGSQNPKMSQRPAPPL) and 73 to 97 (PATVPPPPPGLGPPSERPCPPPWPS). Residues 73 to 96 (PATVPPPPPGLGPPSERPCPPPWP) show a composition bias toward pro residues.

This is an uncharacterized protein from Mus musculus (Mouse).